The sequence spans 1287 residues: SCL-interrupting locus protein (1287 aa).

Methionine 1 is modified (N-acetylmethionine). The segment at 1 to 1018 is interaction with RBM14; it reads MEPIYPFARP…IDSPTKVKKN (1018 aa). The tract at residues 231–781 is interaction with CPAP; the sequence is YKYGYLTMDE…VSVEAQSSPG (551 aa). Disordered regions lie at residues 378–417 and 508–533; these read RSSQKLSSGKMPIHDHDSGVEDEDFSPRPIPSPHPVSQKI and PPAYKKGNPHTRNSIKPSSHNGPSHD. Serine 395 carries the post-translational modification Phosphoserine. Over residues 517 to 529 the composition is skewed to polar residues; the sequence is HTRNSIKPSSHNG. Positions 584–779 are PIN1-binding; the sequence is PMELQIPTPP…ELVSVEAQSS (196 aa). Phosphoserine is present on residues serine 753, serine 779, and serine 1135.

In terms of assembly, homodimer. Interacts with PIN1 via its WW domain. This interaction is dependent on STIL mitotic phosphorylation. Interacts with CPAP. Interacts with RBM14 and this interaction interferes with the interaction of STIL with CPAP. Forms a complex with CPAP and SASS6. Interacts (via N-terminus) with CEP85; this interaction is essential for efficient centriolar targeting of STIL and subsequent PLK4 activation. Ubiquitinated. Post-translationally, phosphorylated following the activation of the mitotic checkpoint. Expressed in all hematopoietic tissues and cell lines. Highly expressed in a variety of tumors characterized by increased mitotic activity with highest expression in lung cancer.

The protein resides in the cytoplasm. It is found in the cytosol. Its subcellular location is the cytoskeleton. It localises to the microtubule organizing center. The protein localises to the centrosome. The protein resides in the centriole. It is found in the cell cortex. In terms of biological role, immediate-early gene. Plays an important role in embryonic development as well as in cellular growth and proliferation; its long-term silencing affects cell survival and cell cycle distribution as well as decreases CDK1 activity correlated with reduced phosphorylation of CDK1. Plays a role as a positive regulator of the sonic hedgehog pathway, acting downstream of PTCH1. Plays an important role in the regulation of centriole duplication. Required for the onset of procentriole formation and proper mitotic progression. During procentriole formation, is essential for the correct loading of SASS6 and CPAP to the base of the procentriole to initiate procentriole assembly. In complex with STIL acts as a modulator of PLK4-driven cytoskeletal rearrangements and directional cell motility. The polypeptide is SCL-interrupting locus protein (STIL) (Homo sapiens (Human)).